The primary structure comprises 398 residues: Bifunctional enzyme IspD/IspF (398 aa).

Residues 1–234 form a 2-C-methyl-D-erythritol 4-phosphate cytidylyltransferase region; that stretch reads MANSRRTAAI…SRLAALLGDI (234 aa). Residues 235–398 form a 2-C-methyl-D-erythritol 2,4-cyclodiphosphate synthase region; that stretch reads RTGTGYDVHA…LPWGPNGLSG (164 aa). 2 residues coordinate a divalent metal cation: D241 and H243. 4-CDP-2-C-methyl-D-erythritol 2-phosphate is bound by residues 241–243 and 267–268; these read DVH and HS. H275 is a binding site for a divalent metal cation. Residues 289–291, 365–368, F372, and R375 each bind 4-CDP-2-C-methyl-D-erythritol 2-phosphate; these read DIG and TTSE.

In the N-terminal section; belongs to the IspD/TarI cytidylyltransferase family. IspD subfamily. This sequence in the C-terminal section; belongs to the IspF family. A divalent metal cation is required as a cofactor.

It carries out the reaction 2-C-methyl-D-erythritol 4-phosphate + CTP + H(+) = 4-CDP-2-C-methyl-D-erythritol + diphosphate. It catalyses the reaction 4-CDP-2-C-methyl-D-erythritol 2-phosphate = 2-C-methyl-D-erythritol 2,4-cyclic diphosphate + CMP. The protein operates within isoprenoid biosynthesis; isopentenyl diphosphate biosynthesis via DXP pathway; isopentenyl diphosphate from 1-deoxy-D-xylulose 5-phosphate: step 2/6. It functions in the pathway isoprenoid biosynthesis; isopentenyl diphosphate biosynthesis via DXP pathway; isopentenyl diphosphate from 1-deoxy-D-xylulose 5-phosphate: step 4/6. In terms of biological role, bifunctional enzyme that catalyzes the formation of 4-diphosphocytidyl-2-C-methyl-D-erythritol from CTP and 2-C-methyl-D-erythritol 4-phosphate (MEP) (IspD), and catalyzes the conversion of 4-diphosphocytidyl-2-C-methyl-D-erythritol 2-phosphate (CDP-ME2P) to 2-C-methyl-D-erythritol 2,4-cyclodiphosphate (ME-CPP) with a corresponding release of cytidine 5-monophosphate (CMP) (IspF). The polypeptide is Bifunctional enzyme IspD/IspF (Rhodopseudomonas palustris (strain BisA53)).